A 504-amino-acid polypeptide reads, in one-letter code: MYIMSKKCYDTSEKIDREQECVEVNYQHRNFESILEIFSVLFIPFLCNSGKKFLQISNASFFLPACFYLLGSSSIIQLYEPLLWLSSFPFCILYVGFGENSVLYHEMYTVCLYNALLSLTQRWKWLSIVLDGLGNSSVNLKLHETVILAFLEITQNSFTFIEGILICTGLTGLCFATFSYEVSPVVSVLSGVLLISLPTLILLNLCILKLAAKLHLSALFTTCLIYFFSALLVFLVSRSWVAGQLGQAPEVWLFNQIFSHRNSLTRIKIIIWWIICLGCFIFILLRSNRNNPLGKYFTTEDEVLNFRRKTYHALVVFLFLPVCCLDPHFLHLSFSGVLFIFLFVEGIRILRLKPFGKMIHEFLWEYTDNRDHKGPLIISHIYLLIGCAIPIWLSNALKGPVASVELLVGVLCLGCGDSMASIIGKRFGKHRISKTNKSIEGVFAFSISVFLVLHLTQAFHVCPSVTFWKTLFMSLCTAILEGVSTENDNLILPMYMWVLYQALD.

Over 1–55 (MYIMSKKCYDTSEKIDREQECVEVNYQHRNFESILEIFSVLFIPFLCNSGKKFLQ) the chain is Cytoplasmic. A helical transmembrane segment spans residues 56–76 (ISNASFFLPACFYLLGSSSII). Residue glutamine 77 is a topological domain, lumenal. The chain crosses the membrane as a helical span at residues 78-98 (LYEPLLWLSSFPFCILYVGFG). Over 99 to 157 (ENSVLYHEMYTVCLYNALLSLTQRWKWLSIVLDGLGNSSVNLKLHETVILAFLEITQNS) the chain is Cytoplasmic. The helical transmembrane segment at 158–178 (FTFIEGILICTGLTGLCFATF) threads the bilayer. At 179–187 (SYEVSPVVS) the chain is on the lumenal side. The helical transmembrane segment at 188–208 (VLSGVLLISLPTLILLNLCIL) threads the bilayer. Residues 209-215 (KLAAKLH) are Cytoplasmic-facing. A helical membrane pass occupies residues 216–236 (LSALFTTCLIYFFSALLVFLV). Topologically, residues 237 to 263 (SRSWVAGQLGQAPEVWLFNQIFSHRNS) are lumenal. The helical transmembrane segment at 264 to 284 (LTRIKIIIWWIICLGCFIFIL) threads the bilayer. The Cytoplasmic portion of the chain corresponds to 285-325 (LRSNRNNPLGKYFTTEDEVLNFRRKTYHALVVFLFLPVCCL). A helical membrane pass occupies residues 326-347 (DPHFLHLSFSGVLFIFLFVEGI). Residues 348–373 (RILRLKPFGKMIHEFLWEYTDNRDHK) lie on the Lumenal side of the membrane. The helical transmembrane segment at 374-394 (GPLIISHIYLLIGCAIPIWLS) threads the bilayer. Topologically, residues 395–403 (NALKGPVAS) are cytoplasmic. Residues 404 to 424 (VELLVGVLCLGCGDSMASIIG) form a helical membrane-spanning segment. Residues 425–440 (KRFGKHRISKTNKSIE) are Lumenal-facing. The helical transmembrane segment at 441 to 461 (GVFAFSISVFLVLHLTQAFHV) threads the bilayer. A topological domain (cytoplasmic) is located at residue cysteine 462. The chain crosses the membrane as a helical span at residues 463-483 (PSVTFWKTLFMSLCTAILEGV). Residues 484–504 (STENDNLILPMYMWVLYQALD) are Lumenal-facing.

It belongs to the polyprenol kinase family.

The protein resides in the endoplasmic reticulum membrane. The catalysed reaction is a di-trans,poly-cis-dolichol + CTP = a di-trans,poly-cis-dolichyl phosphate + CDP + H(+). Its pathway is protein modification; protein glycosylation. Its function is as follows. Catalyzes CTP-mediated phosphorylation of dolichol, the terminal step in de novo dolichyl monophosphate (Dol-P) biosynthesis. Dol-P is a lipid carrier essential for the synthesis of N-linked and O-linked oligosaccharides and for GPI anchors. The polypeptide is Dolichol kinase sec59 (Schizosaccharomyces pombe (strain 972 / ATCC 24843) (Fission yeast)).